Here is a 494-residue protein sequence, read N- to C-terminus: UDP-N-acetylmuramoyl-L-alanyl-D-glutamate--2,6-diaminopimelate ligase (494 aa).

Ser32 lines the UDP-N-acetyl-alpha-D-muramoyl-L-alanyl-D-glutamate pocket. Position 112 to 118 (112 to 118 (GTNGKTT)) interacts with ATP. Residues Asn153, 154–155 (TT), Ser181, and Arg189 contribute to the UDP-N-acetyl-alpha-D-muramoyl-L-alanyl-D-glutamate site. Lys221 is subject to N6-carboxylysine. Residues Arg383, 407–410 (DNPR), Gly459, and Glu463 contribute to the meso-2,6-diaminopimelate site. A Meso-diaminopimelate recognition motif motif is present at residues 407–410 (DNPR).

Belongs to the MurCDEF family. MurE subfamily. Mg(2+) is required as a cofactor. Post-translationally, carboxylation is probably crucial for Mg(2+) binding and, consequently, for the gamma-phosphate positioning of ATP.

The protein localises to the cytoplasm. It carries out the reaction UDP-N-acetyl-alpha-D-muramoyl-L-alanyl-D-glutamate + meso-2,6-diaminopimelate + ATP = UDP-N-acetyl-alpha-D-muramoyl-L-alanyl-gamma-D-glutamyl-meso-2,6-diaminopimelate + ADP + phosphate + H(+). It participates in cell wall biogenesis; peptidoglycan biosynthesis. Catalyzes the addition of meso-diaminopimelic acid to the nucleotide precursor UDP-N-acetylmuramoyl-L-alanyl-D-glutamate (UMAG) in the biosynthesis of bacterial cell-wall peptidoglycan. The protein is UDP-N-acetylmuramoyl-L-alanyl-D-glutamate--2,6-diaminopimelate ligase of Solibacter usitatus (strain Ellin6076).